Here is a 309-residue protein sequence, read N- to C-terminus: 2-phospho-L-lactate transferase (309 aa).

Positions 50 and 89 each coordinate 7,8-didemethyl-8-hydroxy-5-deazariboflavin.

Belongs to the CofD family. Homodimer. It depends on Mg(2+) as a cofactor.

The catalysed reaction is (2S)-lactyl-2-diphospho-5'-guanosine + 7,8-didemethyl-8-hydroxy-5-deazariboflavin = oxidized coenzyme F420-0 + GMP + H(+). It functions in the pathway cofactor biosynthesis; coenzyme F420 biosynthesis. Its function is as follows. Catalyzes the transfer of the 2-phospholactate moiety from (2S)-lactyl-2-diphospho-5'-guanosine to 7,8-didemethyl-8-hydroxy-5-deazariboflavin (FO) with the formation of oxidized coenzyme F420-0 and GMP. This Methanococcus maripaludis (strain C5 / ATCC BAA-1333) protein is 2-phospho-L-lactate transferase.